Here is a 485-residue protein sequence, read N- to C-terminus: Lysophospholipid acyltransferase 5 (485 aa).

Alanine 2 is subject to N-acetylalanine. 7 helical membrane-spanning segments follow: residues 35–55, 82–102, 108–128, 139–158, 176–196, 232–252, and 283–303; these read ASEQ…FALF, YNFG…FLIL, TITA…AGYY, WTMP…MDYY, IWGV…GAFL, LALG…ITED, and VTCW…FNGL. Residues asparagine 336 and histidine 372 contribute to the active site. Transmembrane regions (helical) follow at residues 362–382, 420–440, and 448–468; these read GLSL…LVCF, LAQQ…FCLF, and VYKS…FILP. The Di-lysine motif motif lies at 482-485; the sequence is KKME.

It belongs to the membrane-bound acyltransferase family.

It localises to the endoplasmic reticulum membrane. It catalyses the reaction a 1-acyl-sn-glycero-3-phosphocholine + an acyl-CoA = a 1,2-diacyl-sn-glycero-3-phosphocholine + CoA. The enzyme catalyses a 1-acyl-sn-glycero-3-phosphoethanolamine + an acyl-CoA = a 1,2-diacyl-sn-glycero-3-phosphoethanolamine + CoA. It carries out the reaction a 1-acyl-sn-glycero-3-phospho-L-serine + an acyl-CoA = a 1,2-diacyl-sn-glycero-3-phospho-L-serine + CoA. The catalysed reaction is (9Z,12Z)-octadecadienoyl-CoA + a 1-acyl-sn-glycero-3-phosphocholine = 1-acyl-2-(9Z,12Z)-octadecadienoyl-sn-glycero-3-phosphocholine + CoA. It catalyses the reaction (5Z,8Z,11Z,14Z)-eicosatetraenoyl-CoA + a 1-acyl-sn-glycero-3-phosphocholine = 1-acyl-2-(5Z,8Z,11Z,14Z-eicosatetraenoyl)-sn-glycero-3-phosphocholine + CoA. The enzyme catalyses dodecanoyl-CoA + 1-hexadecanoyl-sn-glycero-3-phosphocholine = 1-hexadecanoyl-2-dodecanoyl-sn-glycero-3-phosphocholine + CoA. It carries out the reaction octadecanoyl-CoA + 1-hexadecanoyl-sn-glycero-3-phosphocholine = 1-hexadecanoyl-2-octadecanoyl-sn-glycero-3-phosphocholine + CoA. The catalysed reaction is 1-dodecanoyl-sn-glycero-3-phosphocholine + hexadecanoyl-CoA = 1-dodecanoyl-2-hexadecanoyl-sn-glycero-3-phosphocholine + CoA. It catalyses the reaction 1-tetradecanoyl-sn-glycero-3-phosphocholine + hexadecanoyl-CoA = 1-tetradecanoyl-2-hexadecanoyl-sn-glycero-3-phosphocholine + CoA. The enzyme catalyses 1-hexadecanoyl-sn-glycero-3-phosphocholine + hexadecanoyl-CoA = 1,2-dihexadecanoyl-sn-glycero-3-phosphocholine + CoA. It carries out the reaction 1-octadecanoyl-sn-glycero-3-phosphocholine + hexadecanoyl-CoA = 1-octadecanoyl-2-hexadecanoyl-sn-glycero-3-phosphocholine + CoA. The catalysed reaction is 1-(9Z-octadecenoyl)-sn-glycero-3-phosphocholine + hexadecanoyl-CoA = 1-(9Z-octadecenoyl)-2-hexadecanoyl-sn-glycero-3-phosphocholine + CoA. It catalyses the reaction (9Z)-hexadecenoyl-CoA + 1-hexadecanoyl-sn-glycero-3-phosphocholine = 1-hexadecanoyl-2-(9Z-hexadecenoyl)-sn-glycero-3-phosphocholine + CoA. The enzyme catalyses 1-hexadecanoyl-sn-glycero-3-phosphocholine + (9Z)-octadecenoyl-CoA = 1-hexadecanoyl-2-(9Z-octadecenoyl)-sn-glycero-3-phosphocholine + CoA. It carries out the reaction (9Z,12Z)-octadecadienoyl-CoA + 1-hexadecanoyl-sn-glycero-3-phosphocholine = 1-hexadecanoyl-2-(9Z,12Z-octadecadienoyl)-sn-glycero-3-phosphocholine + CoA. The catalysed reaction is 1-dodecanoyl-sn-glycero-3-phosphocholine + (5Z,8Z,11Z,14Z)-eicosatetraenoyl-CoA = 1-dodecanoyl-2-(5Z,8Z,11Z,14Z)-eicosatetraenoyl-sn-glycero-3-phosphocholine + CoA. It catalyses the reaction (5Z,8Z,11Z,14Z)-eicosatetraenoyl-CoA + 1-hexadecanoyl-sn-glycero-3-phosphocholine = 1-hexadecanoyl-2-(5Z,8Z,11Z,14Z-eicosatetraenoyl)-sn-glycero-3-phosphocholine + CoA. The enzyme catalyses 1-octadecanoyl-sn-glycero-3-phosphocholine + (5Z,8Z,11Z,14Z)-eicosatetraenoyl-CoA = 1-octadecanoyl-2-(5Z,8Z,11Z,14Z-eicosatetraenoyl)-sn-glycero-3-phosphocholine + CoA. It carries out the reaction 1-eicosanoyl-sn-glycero-3-phosphocholine + (5Z,8Z,11Z,14Z)-eicosatetraenoyl-CoA = 1-eicosanoyl-2-(5Z,8Z,11Z,14Z)-eicosatetraenoyl-sn-glycero-3-phosphocholine + CoA. The catalysed reaction is 1-(9Z-octadecenoyl)-sn-glycero-3-phosphocholine + (9Z)-octadecenoyl-CoA = 1,2-di-(9Z-octadecenoyl)-sn-glycero-3-phosphocholine + CoA. It catalyses the reaction 1-(9Z-octadecenoyl)-sn-glycero-3-phosphocholine + (9Z,12Z)-octadecadienoyl-CoA = 1-(9Z)-octadecenoyl-2-(9Z,12Z)-octadecadienoyl-sn-glycero-3-phosphocholine + CoA. The enzyme catalyses 1-(9Z-octadecenoyl)-sn-glycero-3-phosphocholine + (5Z,8Z,11Z,14Z)-eicosatetraenoyl-CoA = 1-(9Z)-octadecenoyl-2-(5Z,8Z,11Z,14Z)-icosatetraenoyl-sn-glycero-3-phosphocholine + CoA. It carries out the reaction a 1-acyl-sn-glycero-3-phosphoethanolamine + (9Z,12Z)-octadecadienoyl-CoA = 1-acyl-2-(9Z,12Z)-octadecadienoyl-sn-glycero-3-phosphoethanolamine + CoA. The catalysed reaction is 1-(9Z-octadecenoyl)-sn-glycero-3-phosphoethanolamine + (9Z,12Z)-octadecadienoyl-CoA = 1-(9Z)-octadecenoyl-2-(9Z,12Z)-octadecadienoyl-sn-glycero-3-phosphoethanolamine + CoA. It catalyses the reaction 1-(10Z-heptadecenoyl)-sn-glycero-3-phosphoethanolamine + (9Z,12Z)-octadecadienoyl-CoA = 1-(10Z-heptadecenoyl)-2-(9Z,12Z-octadecadienoyl)-sn-glycero-3-phosphoethanolamine + CoA. The enzyme catalyses a 1-acyl-sn-glycero-3-phosphoethanolamine + (5Z,8Z,11Z,14Z)-eicosatetraenoyl-CoA = 1-acyl-2-(5Z,8Z,11Z,14Z)-eicosatetraenoyl-sn-glycero-3-phosphoethanolamine + CoA. It carries out the reaction 1-hexadecanoyl-sn-glycero-3-phosphoethanolamine + (5Z,8Z,11Z,14Z)-eicosatetraenoyl-CoA = 1-hexadecanoyl-2-(5Z,8Z,11Z,14Z-eicosatetraenoyl)-sn-glycero-3-phosphoethanolamine + CoA. The catalysed reaction is 1-(9Z-octadecenoyl)-sn-glycero-3-phosphoethanolamine + (5Z,8Z,11Z,14Z)-eicosatetraenoyl-CoA = 1-(9Z)-octadecenoyl-2-(5Z,8Z,11Z,14Z)-eicosatetraenoyl-sn-glycero-3-phosphoethanolamine + CoA. It catalyses the reaction 1-(10Z-heptadecenoyl)-sn-glycero-3-phosphoethanolamine + (5Z,8Z,11Z,14Z)-eicosatetraenoyl-CoA = 1-(10Z-heptadecenoyl)-2-(5Z,8Z,11Z,14Z-eicosatetraenoyl)-sn-glycero-3-phosphoethanolamine + CoA. The enzyme catalyses a 1-O-(1Z-alkenyl)-sn-glycero-3-phosphoethanolamine + (5Z,8Z,11Z,14Z)-eicosatetraenoyl-CoA = 1-O-(1Z)-alkenyl-2-(5Z,8Z,11Z,14Z)-eicosatetraenoyl-sn-glycero-3-phosphoethanolamine + CoA. It carries out the reaction a 1-acyl-sn-glycero-3-phospho-L-serine + (9Z,12Z)-octadecadienoyl-CoA = 1-acyl-2-(9Z,12Z-octadecadienoyl)-sn-glycero-3-phospho-L-serine + CoA. The catalysed reaction is a 1-acyl-sn-glycero-3-phospho-L-serine + (5Z,8Z,11Z,14Z)-eicosatetraenoyl-CoA = 1-acyl-2-(5Z,8Z,11Z,14Z-eicosatetraenoyl)-sn-glycero-3-phospho-L-serine + CoA. It catalyses the reaction 1-hexadecanoyl-sn-glycero-3-phospho-L-serine + (9Z)-octadecenoyl-CoA = 1-hexadecanoyl-2-(9Z-octadecenoyl)-sn-glycero-3-phospho-L-serine + CoA. The enzyme catalyses 1-(9Z-octadecenoyl)-sn-glycero-3-phospho-L-serine + (9Z)-octadecenoyl-CoA = 1,2-di-(9Z)-octadecenoyl-sn-glycero-3-phospho-L-serine + CoA. It carries out the reaction 1-hexadecanoyl-sn-glycero-3-phospho-L-serine + (9Z,12Z)-octadecadienoyl-CoA = 1-hexadecanoyl-2-(9Z,12Z-octadecadienoyl)-sn-glycero-3-phospho-L-serine + CoA. The catalysed reaction is 1-(9Z-octadecenoyl)-sn-glycero-3-phospho-L-serine + (9Z,12Z)-octadecadienoyl-CoA = 1-(9Z-octadecenoyl)-2-(9Z,12Z-octadienoyl)-sn-glycero-3-phospho-L-serine + CoA. It catalyses the reaction 1-hexadecanoyl-sn-glycero-3-phospho-L-serine + (5Z,8Z,11Z,14Z)-eicosatetraenoyl-CoA = 1-hexadecanoyl-2-(5Z,8Z,11Z,14Z-eicosatetraenoyl)-sn-glycero-3-phospho-L-serine + CoA. The enzyme catalyses 1-(9Z-octadecenoyl)-sn-glycero-3-phospho-L-serine + (5Z,8Z,11Z,14Z)-eicosatetraenoyl-CoA = 1-(9Z-octadecenoyl)-2-(5Z,8Z,11Z,14Z-eicosatetraenoyl)-sn-glycero-3-phospho-L-serine + CoA. Its pathway is lipid metabolism; phospholipid metabolism. In terms of biological role, lysophospholipid O-acyltransferase (LPLAT) that catalyzes the reacylation step of the phospholipid remodeling process also known as the Lands cycle. Catalyzes transfer of the fatty acyl chain from fatty acyl-CoA to 1-acyl lysophospholipid to form various classes of phospholipids. Converts 1-acyl lysophosphatidylcholine (LPC) into phosphatidylcholine (PC) (LPCAT activity), 1-acyl lysophosphatidylserine (LPS) into phosphatidylserine (PS) (LPSAT activity) and 1-acyl lysophosphatidylethanolamine (LPE) into phosphatidylethanolamine (PE) (LPEAT activity). Favors polyunsaturated fatty acyl-CoAs as acyl donors compared to saturated fatty acyl-CoAs. Has higher activity for LPC acyl acceptors compared to LPEs and LPSs. Can also transfer the fatty acyl chain from fatty acyl-CoA to 1-O-alkyl lysophospholipid or 1-O-alkenyl lysophospholipid with lower efficiency. Acts as a major LPC O-acyltransferase in liver and intestine. As a component of the liver X receptor/NR1H3 or NR1H2 signaling pathway, mainly catalyzes the incorporation of arachidonate into PCs of endoplasmic reticulum (ER) membranes, increasing membrane dynamics and enabling triacylglycerols transfer to nascent very low-density lipoprotein (VLDL) particles. Promotes processing of sterol regulatory protein SREBF1 in hepatocytes, likely by facilitating the translocation of SREBF1-SCAP complex from ER to the Golgi apparatus. Participates in mechanisms by which the liver X receptor/NR1H3 or NR1H2 signaling pathway counteracts lipid-induced ER stress response and inflammation. Down-regulates hepatic inflammation by limiting arachidonic acid availability for synthesis of inflammatory eicosanoids, such as prostaglandins. In enterocytes, acts as a component of a gut-brain feedback loop that coordinates dietary lipid absorption and food intake. Regulates the abundance of PCs containing linoleate and arachidonate in enterocyte membranes, enabling passive diffusion of fatty acids and cholesterol across the membrane for efficient chylomicron assembly. In the intestinal crypt, acts as a component of dietary-responsive phospholipid-cholesterol axis, regulating the biosynthesis of cholesterol and its mitogenic effects on intestinal stem cells. The sequence is that of Lysophospholipid acyltransferase 5 (LPCAT3) from Bos taurus (Bovine).